Here is a 177-residue protein sequence, read N- to C-terminus: tRNA-splicing endonuclease (177 aa).

Residues Tyr-114, His-123, and Lys-154 contribute to the active site.

Belongs to the tRNA-intron endonuclease family. Archaeal short subfamily. In terms of assembly, homotetramer; although the tetramer contains four active sites, only two participate in the cleavage. Therefore, it should be considered as a dimer of dimers.

The enzyme catalyses pretRNA = a 3'-half-tRNA molecule with a 5'-OH end + a 5'-half-tRNA molecule with a 2',3'-cyclic phosphate end + an intron with a 2',3'-cyclic phosphate and a 5'-hydroxyl terminus.. Its function is as follows. Endonuclease that removes tRNA introns. Cleaves pre-tRNA at the 5'- and 3'-splice sites to release the intron. The products are an intron and two tRNA half-molecules bearing 2',3' cyclic phosphate and 5'-OH termini. Recognizes a pseudosymmetric substrate in which 2 bulged loops of 3 bases are separated by a stem of 4 bp. The protein is tRNA-splicing endonuclease of Methanococcus vannielii (strain ATCC 35089 / DSM 1224 / JCM 13029 / OCM 148 / SB).